We begin with the raw amino-acid sequence, 260 residues long: MGFLDLPFMLKAFRFRRLVVEDGKRRKKKKPLWLTPVSHGYYTVDRLSYADNSSNDDSVFVQREQQSDELEIWLFGVSNAGTGKEIVKYMQNHLFDKLPNELGIMRKCKETMRRAYVEEERTGGSAASVMVVNGEKLAIASIGDHRVVVCKDGEAHQIRDRKASTKHWSQFIFPVCNQGEEEDESDPRNSELVVITEKINSDTEFIIIGSPGIWEVMKSQEAINLIRHIEDPKEAAKCLAKEALNRISKSSISCVVIRFG.

Residues 41-259 (YYTVDRLSYA…SSISCVVIRF (219 aa)) enclose the PPM-type phosphatase domain.

It belongs to the PP2C family.

This is Putative protein phosphatase 2C-like protein 44 from Arabidopsis thaliana (Mouse-ear cress).